Here is a 341-residue protein sequence, read N- to C-terminus: L-sulfolactate dehydrogenase (341 aa).

Belongs to the LDH2/MDH2 oxidoreductase family.

Its subcellular location is the cytoplasm. The enzyme catalyses a (2S)-2-hydroxycarboxylate + NAD(+) = a 2-oxocarboxylate + NADH + H(+). It participates in cofactor biosynthesis; coenzyme M biosynthesis; sulfoacetaldehyde from phosphoenolpyruvate and sulfite: step 3/4. The protein operates within cofactor biosynthesis; 5,6,7,8-tetrahydromethanopterin biosynthesis. Its function is as follows. Catalyzes the reduction of sulfopyruvate to (R)-sulfolactate. Involved in the biosynthesis of both coenzyme M (with (R)-sulfolactate) and methanopterin (with alpha-ketoglutarate). This is L-sulfolactate dehydrogenase (comC) from Methanothermobacter thermautotrophicus (strain ATCC 29096 / DSM 1053 / JCM 10044 / NBRC 100330 / Delta H) (Methanobacterium thermoautotrophicum).